Here is a 397-residue protein sequence, read N- to C-terminus: Elongation factor Tu (397 aa).

The region spanning 10–206 is the tr-type G domain; sequence KPHVNIGTIG…AVDESIPEPQ (197 aa). The tract at residues 19-26 is G1; the sequence is GHIDHGKT. Residue 19–26 participates in GTP binding; the sequence is GHIDHGKT. Threonine 26 serves as a coordination point for Mg(2+). The tract at residues 62–66 is G2; it reads GITIS. The interval 83 to 86 is G3; that stretch reads DCPG. GTP is bound by residues 83 to 87 and 138 to 141; these read DCPGH and NKAD. A G4 region spans residues 138–141; it reads NKAD. A G5 region spans residues 176 to 178; the sequence is SAL.

It belongs to the TRAFAC class translation factor GTPase superfamily. Classic translation factor GTPase family. EF-Tu/EF-1A subfamily. In terms of assembly, monomer.

The protein resides in the cytoplasm. It carries out the reaction GTP + H2O = GDP + phosphate + H(+). Functionally, GTP hydrolase that promotes the GTP-dependent binding of aminoacyl-tRNA to the A-site of ribosomes during protein biosynthesis. The chain is Elongation factor Tu from Frankia casuarinae (strain DSM 45818 / CECT 9043 / HFP020203 / CcI3).